The sequence spans 552 residues: Protein FAM234A (552 aa).

The interval 1-40 (MMDDKDLEAEIHPLKNEDKKSQENLGNLPKTEDNLKNKPV) is disordered. Residues 1–49 (MMDDKDLEAEIHPLKNEDKKSQENLGNLPKTEDNLKNKPVPSRLSRCRT) lie on the Cytoplasmic side of the membrane. Over residues 8–22 (EAEIHPLKNEDKKSQ) the composition is skewed to basic and acidic residues. Phosphoserine is present on serine 21. A helical; Signal-anchor for type II membrane protein transmembrane segment spans residues 50 to 70 (VAFFLSLFICLFVVFVLSFII). Residues 71–552 (PCPDRPSSED…FSRLRYRSEV (482 aa)) lie on the Extracellular side of the membrane. 4 N-linked (GlcNAc...) asparagine glycosylation sites follow: asparagine 116, asparagine 119, asparagine 314, and asparagine 473.

This sequence belongs to the FAM234 family.

It is found in the membrane. In Rattus norvegicus (Rat), this protein is Protein FAM234A (Fam234a).